The primary structure comprises 150 residues: UPF0756 membrane protein YPN_1328 (150 aa).

4 helical membrane-spanning segments follow: residues 16-36 (ALGI…LIAI), 51-71 (YGLT…IASG), 88-108 (ILAI…VSLM), and 114-134 (VVAG…GVPV).

This sequence belongs to the UPF0756 family.

It localises to the cell membrane. The protein is UPF0756 membrane protein YPN_1328 of Yersinia pestis bv. Antiqua (strain Nepal516).